A 659-amino-acid polypeptide reads, in one-letter code: Threonine--tRNA ligase (659 aa).

Residues 1–60 enclose the TGS domain; sequence MTVYLPDGKPLELPEGATAKDVARALGEGWERRAVGAIVDGELYDLLKPLPQGAKVRLLT. The catalytic stretch occupies residues 252-552; it reads DHRRLGRELE…LIEHFAGDFP (301 aa). 3 residues coordinate Zn(2+): cysteine 349, histidine 400, and histidine 529.

The protein belongs to the class-II aminoacyl-tRNA synthetase family. In terms of assembly, homodimer. Zn(2+) is required as a cofactor.

The protein resides in the cytoplasm. It carries out the reaction tRNA(Thr) + L-threonine + ATP = L-threonyl-tRNA(Thr) + AMP + diphosphate + H(+). Functionally, catalyzes the attachment of threonine to tRNA(Thr) in a two-step reaction: L-threonine is first activated by ATP to form Thr-AMP and then transferred to the acceptor end of tRNA(Thr). Also edits incorrectly charged L-seryl-tRNA(Thr). The protein is Threonine--tRNA ligase of Thermus thermophilus (strain ATCC BAA-163 / DSM 7039 / HB27).